Consider the following 388-residue polypeptide: Chorismate synthase (388 aa).

Positions 39 and 45 each coordinate NADP(+). FMN-binding positions include 130–132, 251–252, G296, 311–315, and R337; these read RSS, NA, and KPIPT.

Belongs to the chorismate synthase family. Homotetramer. Requires FMNH2 as cofactor.

It carries out the reaction 5-O-(1-carboxyvinyl)-3-phosphoshikimate = chorismate + phosphate. It participates in metabolic intermediate biosynthesis; chorismate biosynthesis; chorismate from D-erythrose 4-phosphate and phosphoenolpyruvate: step 7/7. Catalyzes the anti-1,4-elimination of the C-3 phosphate and the C-6 proR hydrogen from 5-enolpyruvylshikimate-3-phosphate (EPSP) to yield chorismate, which is the branch point compound that serves as the starting substrate for the three terminal pathways of aromatic amino acid biosynthesis. This reaction introduces a second double bond into the aromatic ring system. This chain is Chorismate synthase, found in Geobacillus thermodenitrificans (strain NG80-2).